A 246-amino-acid chain; its full sequence is Dihydroorotate dehydrogenase B (NAD(+)), electron transfer subunit (246 aa).

One can recognise an FAD-binding FR-type domain in the interval 3-97; it reads EKYTVEKVYE…TGPLGNGFNV (95 aa). FAD is bound by residues 50-53 and 72-73; these read RPIS and GT. 4 residues coordinate [2Fe-2S] cluster: Cys-211, Cys-216, Cys-219, and Cys-231.

This sequence belongs to the PyrK family. Heterotetramer of 2 PyrK and 2 PyrD type B subunits. [2Fe-2S] cluster is required as a cofactor. It depends on FAD as a cofactor.

The protein operates within pyrimidine metabolism; UMP biosynthesis via de novo pathway; orotate from (S)-dihydroorotate (NAD(+) route): step 1/1. Functionally, responsible for channeling the electrons from the oxidation of dihydroorotate from the FMN redox center in the PyrD type B subunit to the ultimate electron acceptor NAD(+). The sequence is that of Dihydroorotate dehydrogenase B (NAD(+)), electron transfer subunit from Clostridium acetobutylicum (strain ATCC 824 / DSM 792 / JCM 1419 / IAM 19013 / LMG 5710 / NBRC 13948 / NRRL B-527 / VKM B-1787 / 2291 / W).